A 361-amino-acid chain; its full sequence is Phosphoserine aminotransferase (361 aa).

Arginine 42 contributes to the L-glutamate binding site. Pyridoxal 5'-phosphate is bound by residues 76–77, tryptophan 102, threonine 152, aspartate 172, and glutamine 195; that span reads AT. Lysine 196 bears the N6-(pyridoxal phosphate)lysine mark. 237–238 is a pyridoxal 5'-phosphate binding site; that stretch reads NT.

It belongs to the class-V pyridoxal-phosphate-dependent aminotransferase family. SerC subfamily. Homodimer. The cofactor is pyridoxal 5'-phosphate.

The protein resides in the cytoplasm. The catalysed reaction is O-phospho-L-serine + 2-oxoglutarate = 3-phosphooxypyruvate + L-glutamate. It carries out the reaction 4-(phosphooxy)-L-threonine + 2-oxoglutarate = (R)-3-hydroxy-2-oxo-4-phosphooxybutanoate + L-glutamate. The protein operates within amino-acid biosynthesis; L-serine biosynthesis; L-serine from 3-phospho-D-glycerate: step 2/3. It participates in cofactor biosynthesis; pyridoxine 5'-phosphate biosynthesis; pyridoxine 5'-phosphate from D-erythrose 4-phosphate: step 3/5. Its function is as follows. Catalyzes the reversible conversion of 3-phosphohydroxypyruvate to phosphoserine and of 3-hydroxy-2-oxo-4-phosphonooxybutanoate to phosphohydroxythreonine. This Xanthomonas euvesicatoria pv. vesicatoria (strain 85-10) (Xanthomonas campestris pv. vesicatoria) protein is Phosphoserine aminotransferase.